The primary structure comprises 317 residues: Transaldolase (317 aa).

The active-site Schiff-base intermediate with substrate is the Lys132.

It belongs to the transaldolase family. Type 1 subfamily.

The protein resides in the cytoplasm. It carries out the reaction D-sedoheptulose 7-phosphate + D-glyceraldehyde 3-phosphate = D-erythrose 4-phosphate + beta-D-fructose 6-phosphate. The protein operates within carbohydrate degradation; pentose phosphate pathway; D-glyceraldehyde 3-phosphate and beta-D-fructose 6-phosphate from D-ribose 5-phosphate and D-xylulose 5-phosphate (non-oxidative stage): step 2/3. Transaldolase is important for the balance of metabolites in the pentose-phosphate pathway. The polypeptide is Transaldolase (Haemophilus influenzae (strain ATCC 51907 / DSM 11121 / KW20 / Rd)).